The chain runs to 130 residues: MASVKLASLIVLFATLGMFLTKNVGAISCNGVCSPFDIPPCGSPLCRCIPAGLVIGNCRNPYGVFLRTNDEHPNLCESDADCRKKGSGTFCGHYPNPDIEYGWCFASKSEAEDVFSKITPKDLLKSVSTA.

Residues 1 to 26 (MASVKLASLIVLFATLGMFLTKNVGA) form the signal peptide. Disulfide bonds link C29–C46, C33–C48, and C41–C58. Propeptides lie at residues 64-69 (VFLRTN) and 123-130 (LLKSVSTA).

In terms of processing, the C-terminal glycine may be removed from PA1b. In terms of tissue distribution, major component of both the cotyledons and embryonic axes of mature seeds.

Functionally, PA1b binds to basic 7S globulin (BG) and stimulates its phosphorylation activity. Involved in the signal transduction system to regulate the growth and differentiation as a hormone peptide. Toxic to various insects through binding to a high affinity binding site in the insect gut. This is Albumin-1 C from Pisum sativum (Garden pea).